The following is a 214-amino-acid chain: Adenylate kinase (214 aa).

An ATP-binding site is contributed by 12 to 17 (GVGKGT). The NMP stretch occupies residues 32–61 (STGNIFRSQIASNSELGIKLKEIVESGGYV). AMP-binding positions include threonine 33, arginine 38, 59–61 (GYV), 88–91 (GYPR), and glutamine 95. Residues 126–163 (GRRICPSCNAQYHIYFKKSKLDTKCEIDQSELIQRKDD) form an LID region. Position 127 (arginine 127) interacts with ATP. Zn(2+) contacts are provided by cysteine 130, cysteine 133, cysteine 150, and aspartate 153. AMP is bound by residues arginine 160 and arginine 171. Lysine 199 contributes to the ATP binding site.

This sequence belongs to the adenylate kinase family. Monomer.

The protein resides in the cytoplasm. It carries out the reaction AMP + ATP = 2 ADP. Its pathway is purine metabolism; AMP biosynthesis via salvage pathway; AMP from ADP: step 1/1. Functionally, catalyzes the reversible transfer of the terminal phosphate group between ATP and AMP. Plays an important role in cellular energy homeostasis and in adenine nucleotide metabolism. The protein is Adenylate kinase of Mycoplasmopsis pulmonis (strain UAB CTIP) (Mycoplasma pulmonis).